We begin with the raw amino-acid sequence, 223 residues long: Deoxyribose-phosphate aldolase (223 aa).

Catalysis depends on D92, which acts as the Proton donor/acceptor. The Schiff-base intermediate with acetaldehyde role is filled by K154. The Proton donor/acceptor role is filled by K182.

Belongs to the DeoC/FbaB aldolase family. DeoC type 1 subfamily.

Its subcellular location is the cytoplasm. The catalysed reaction is 2-deoxy-D-ribose 5-phosphate = D-glyceraldehyde 3-phosphate + acetaldehyde. The protein operates within carbohydrate degradation; 2-deoxy-D-ribose 1-phosphate degradation; D-glyceraldehyde 3-phosphate and acetaldehyde from 2-deoxy-alpha-D-ribose 1-phosphate: step 2/2. Catalyzes a reversible aldol reaction between acetaldehyde and D-glyceraldehyde 3-phosphate to generate 2-deoxy-D-ribose 5-phosphate. The chain is Deoxyribose-phosphate aldolase from Haemophilus influenzae (strain 86-028NP).